The sequence spans 118 residues: Holo-[acyl-carrier-protein] synthase (118 aa).

Residues D8 and E58 each coordinate Mg(2+).

The protein belongs to the P-Pant transferase superfamily. AcpS family. The cofactor is Mg(2+).

It is found in the cytoplasm. It carries out the reaction apo-[ACP] + CoA = holo-[ACP] + adenosine 3',5'-bisphosphate + H(+). Transfers the 4'-phosphopantetheine moiety from coenzyme A to a Ser of acyl-carrier-protein. In Streptococcus pyogenes serotype M12 (strain MGAS2096), this protein is Holo-[acyl-carrier-protein] synthase.